Here is a 291-residue protein sequence, read N- to C-terminus: Lipoyl synthase, organellar chromatophore (291 aa).

Residues C33, C38, C44, C59, C63, C66, and S274 each contribute to the [4Fe-4S] cluster site. One can recognise a Radical SAM core domain in the interval 45–263; sequence FAGGTATFLI…AIGELEMNFL (219 aa).

It belongs to the radical SAM superfamily. Lipoyl synthase family. It depends on [4Fe-4S] cluster as a cofactor.

It localises to the plastid. Its subcellular location is the organellar chromatophore. It catalyses the reaction [[Fe-S] cluster scaffold protein carrying a second [4Fe-4S](2+) cluster] + N(6)-octanoyl-L-lysyl-[protein] + 2 oxidized [2Fe-2S]-[ferredoxin] + 2 S-adenosyl-L-methionine + 4 H(+) = [[Fe-S] cluster scaffold protein] + N(6)-[(R)-dihydrolipoyl]-L-lysyl-[protein] + 4 Fe(3+) + 2 hydrogen sulfide + 2 5'-deoxyadenosine + 2 L-methionine + 2 reduced [2Fe-2S]-[ferredoxin]. It functions in the pathway protein modification; protein lipoylation via endogenous pathway; protein N(6)-(lipoyl)lysine from octanoyl-[acyl-carrier-protein]: step 2/2. In terms of biological role, catalyzes the radical-mediated insertion of two sulfur atoms into the C-6 and C-8 positions of the octanoyl moiety bound to the lipoyl domains of lipoate-dependent enzymes, thereby converting the octanoylated domains into lipoylated derivatives. The polypeptide is Lipoyl synthase, organellar chromatophore (Paulinella chromatophora).